Consider the following 609-residue polypeptide: Phosphatidylinositol N-acetylglucosaminyltransferase subunit GPI1 (609 aa).

At 1 to 186 (MPNYIFWPYE…STCIYKMVAK (186 aa)) the chain is on the extracellular side. The helical transmembrane segment at 187 to 207 (IGFYLTFVICSIASLVSSLLN) threads the bilayer. At 208–280 (YSHFQLVNYS…FYPDYILLYN (73 aa)) the chain is on the cytoplasmic side. A helical transmembrane segment spans residues 281–301 (TIWLIINDISFGLILGAILIE). The Extracellular segment spans residues 302–380 (NRDFLVSASH…LSSLLTLTIY (79 aa)). The helical transmembrane segment at 381-401 (MMFLVGFSFAVSLAIDFFAIL) threads the bilayer. Residues 402–451 (SFPIYVFYRISSKLYHCQLNIMASLFNLFCGKKRNVLRNRIDHNYFQLDQ) are Cytoplasmic-facing. A helical membrane pass occupies residues 452 to 472 (LLLGTLLFIILVFLTPTVMAF). At 473 to 485 (YMSYTVLRMLTIT) the chain is on the extracellular side. The helical transmembrane segment at 486 to 506 (IEIFSEAVIALINHFPLFALL) threads the bilayer. Topologically, residues 507–609 (LRLKDPKRLP…DLYKRLTIQA (103 aa)) are cytoplasmic.

It belongs to the PIGQ family. As to quaternary structure, component of the phosphatidylinositol N-acetylglucosaminyltransferase (GPI-GlcNAc transferase) complex composed of at least GPI1, GPI2, GPI3, GPI15, GPI19 and ERI1.

It localises to the membrane. The enzyme catalyses a 1,2-diacyl-sn-glycero-3-phospho-(1D-myo-inositol) + UDP-N-acetyl-alpha-D-glucosamine = a 6-(N-acetyl-alpha-D-glucosaminyl)-1-(1,2-diacyl-sn-glycero-3-phospho)-1D-myo-inositol + UDP + H(+). The protein operates within glycolipid biosynthesis; glycosylphosphatidylinositol-anchor biosynthesis. Its function is as follows. Part of the complex catalyzing the transfer of N-acetylglucosamine from UDP-N-acetylglucosamine to phosphatidylinositol, the first step of GPI biosynthesis. The polypeptide is Phosphatidylinositol N-acetylglucosaminyltransferase subunit GPI1 (GPI1) (Saccharomyces cerevisiae (strain ATCC 204508 / S288c) (Baker's yeast)).